Reading from the N-terminus, the 116-residue chain is Large ribosomal subunit protein uL18 (116 aa).

Belongs to the universal ribosomal protein uL18 family. In terms of assembly, part of the 50S ribosomal subunit; part of the 5S rRNA/L5/L18/L25 subcomplex. Contacts the 5S and 23S rRNAs.

In terms of biological role, this is one of the proteins that bind and probably mediate the attachment of the 5S RNA into the large ribosomal subunit, where it forms part of the central protuberance. This is Large ribosomal subunit protein uL18 from Shewanella halifaxensis (strain HAW-EB4).